The primary structure comprises 142 residues: Galactose-6-phosphate isomerase subunit LacA 2 (142 aa).

It belongs to the LacAB/RpiB family. In terms of assembly, heteromultimeric protein consisting of LacA and LacB.

It carries out the reaction aldehydo-D-galactose 6-phosphate = keto-D-tagatose 6-phosphate. It functions in the pathway carbohydrate metabolism; D-galactose 6-phosphate degradation; D-tagatose 6-phosphate from D-galactose 6-phosphate: step 1/1. The chain is Galactose-6-phosphate isomerase subunit LacA 2 from Streptococcus pyogenes serotype M3 (strain ATCC BAA-595 / MGAS315).